The chain runs to 284 residues: Polyamine aminopropyltransferase (284 aa).

In terms of domain architecture, PABS spans 2–237 (ELWYTEQHTE…GHWLFGFASK (236 aa)). Q31 provides a ligand contact to S-methyl-5'-thioadenosine. Spermidine contacts are provided by H62 and D86. S-methyl-5'-thioadenosine contacts are provided by residues E106 and 137–138 (DG). D155 functions as the Proton acceptor in the catalytic mechanism. 155–158 (DSTD) provides a ligand contact to spermidine. P162 lines the S-methyl-5'-thioadenosine pocket.

This sequence belongs to the spermidine/spermine synthase family. Homodimer or homotetramer.

It localises to the cytoplasm. The catalysed reaction is S-adenosyl 3-(methylsulfanyl)propylamine + putrescine = S-methyl-5'-thioadenosine + spermidine + H(+). It functions in the pathway amine and polyamine biosynthesis; spermidine biosynthesis; spermidine from putrescine: step 1/1. Catalyzes the irreversible transfer of a propylamine group from the amino donor S-adenosylmethioninamine (decarboxy-AdoMet) to putrescine (1,4-diaminobutane) to yield spermidine. The protein is Polyamine aminopropyltransferase of Clostridium beijerinckii (strain ATCC 51743 / NCIMB 8052) (Clostridium acetobutylicum).